The primary structure comprises 153 residues: Putative type II secretion system protein M (153 aa).

Topologically, residues 1–16 (MIKSWWAEKSTSEKQI) are cytoplasmic. Residues 17–37 (VAALAVLSLGVFCWLGVIKPI) form a helical membrane-spanning segment. Residues 38–153 (DTYIAEHQSH…LRHLSFREQQ (116 aa)) lie on the Periplasmic side of the membrane.

The protein belongs to the GSP M family. Type II secretion system is composed of four main components: the outer membrane complex, the inner membrane complex, the cytoplasmic secretion ATPase and the periplasm-spanning pseudopilus. Forms homodimers. Interacts with GspL. Interacts with GspE and GspF.

It is found in the cell inner membrane. In terms of biological role, inner membrane component of the type II secretion system required for the energy-dependent secretion of extracellular factors such as proteases and toxins from the periplasm. Plays a role in the complex assembly and recruits GspL resulting in a stable complex in the inner membrane. Provides thus a link between the energy-providing GspE protein in the cytoplasm and the rest of the T2SS machinery. This chain is Putative type II secretion system protein M (gspM), found in Escherichia coli (strain K12).